Reading from the N-terminus, the 401-residue chain is Acetate kinase (401 aa).

Residue Asn7 participates in Mg(2+) binding. Residue Lys14 coordinates ATP. Arg91 is a binding site for substrate. Catalysis depends on Asp148, which acts as the Proton donor/acceptor. ATP contacts are provided by residues His208 to Gly212, Asp283 to Arg285, and Gly331 to Asn335. Glu384 is a Mg(2+) binding site.

Belongs to the acetokinase family. As to quaternary structure, homodimer. It depends on Mg(2+) as a cofactor. The cofactor is Mn(2+).

Its subcellular location is the cytoplasm. It carries out the reaction acetate + ATP = acetyl phosphate + ADP. Its pathway is metabolic intermediate biosynthesis; acetyl-CoA biosynthesis; acetyl-CoA from acetate: step 1/2. Catalyzes the formation of acetyl phosphate from acetate and ATP. Can also catalyze the reverse reaction. This chain is Acetate kinase, found in Helicobacter hepaticus (strain ATCC 51449 / 3B1).